The chain runs to 140 residues: Putative ABC transporter permease protein ORF1 (140 aa).

In terms of domain architecture, ABC transmembrane type-1 spans 1–133 (DPNVAFYSVV…ITTAGIFAYF (133 aa)). The next 3 helical transmembrane spans lie at 9-29 (VVAV…IAAL), 65-85 (TACI…YVMT), and 115-135 (TIAS…YFVT).

This sequence belongs to the binding-protein-dependent transport system permease family. MalFG subfamily.

It localises to the cell membrane. In terms of biological role, may play a role in sugar transport. This chain is Putative ABC transporter permease protein ORF1, found in Caldicellulosiruptor sp. (strain Rt8B.4).